Consider the following 437-residue polypeptide: Enolase (437 aa).

Gln166 lines the (2R)-2-phosphoglycerate pocket. Catalysis depends on Glu208, which acts as the Proton donor. The Mg(2+) site is built by Asp245, Glu295, and Asp322. (2R)-2-phosphoglycerate-binding residues include Lys347, Arg376, Ser377, and Lys398. Residue Lys347 is the Proton acceptor of the active site.

The protein belongs to the enolase family. Mg(2+) is required as a cofactor.

The protein resides in the cytoplasm. It is found in the secreted. It localises to the cell surface. It carries out the reaction (2R)-2-phosphoglycerate = phosphoenolpyruvate + H2O. Its pathway is carbohydrate degradation; glycolysis; pyruvate from D-glyceraldehyde 3-phosphate: step 4/5. Its function is as follows. Catalyzes the reversible conversion of 2-phosphoglycerate (2-PG) into phosphoenolpyruvate (PEP). It is essential for the degradation of carbohydrates via glycolysis. This chain is Enolase, found in Lachnoclostridium phytofermentans (strain ATCC 700394 / DSM 18823 / ISDg) (Clostridium phytofermentans).